The sequence spans 251 residues: GTP cyclohydrolase 1 type 2 homolog (251 aa).

5 residues coordinate a divalent metal cation: His-64, His-65, Asp-102, His-219, and Glu-223.

This sequence belongs to the GTP cyclohydrolase I type 2/NIF3 family. As to quaternary structure, homohexamer.

The sequence is that of GTP cyclohydrolase 1 type 2 homolog from Chlamydia trachomatis serovar D (strain ATCC VR-885 / DSM 19411 / UW-3/Cx).